Reading from the N-terminus, the 210-residue chain is Holliday junction resolvase RecU (210 aa).

A disordered region spans residues 1–34 (MAFHYPNGQPYSNHETKQPKKQGRHTSPTTLYGK). Positions 90, 92, 105, and 124 each coordinate Mg(2+).

It belongs to the RecU family. Requires Mg(2+) as cofactor.

Its subcellular location is the cytoplasm. It carries out the reaction Endonucleolytic cleavage at a junction such as a reciprocal single-stranded crossover between two homologous DNA duplexes (Holliday junction).. Endonuclease that resolves Holliday junction intermediates in genetic recombination. Cleaves mobile four-strand junctions by introducing symmetrical nicks in paired strands. Promotes annealing of linear ssDNA with homologous dsDNA. Required for DNA repair, homologous recombination and chromosome segregation. This chain is Holliday junction resolvase RecU, found in Latilactobacillus sakei subsp. sakei (strain 23K) (Lactobacillus sakei subsp. sakei).